Consider the following 401-residue polypeptide: Ribosomal RNA dihydrouridine synthase (401 aa).

Positions 15, 34, 35, 41, 47, 52, 132, 371, and 384 each coordinate FAD.

The protein belongs to the BaiN/RdsA family. RdsA subfamily. Requires FAD as cofactor.

The enzyme catalyses a 5,6-dihydrouridine in mRNA + NAD(+) = a uridine in mRNA + NADH + H(+). In terms of biological role, catalyzes the synthesis of 5,6-dihydrouridine (D) at position 2449 in 23S rRNA. The sequence is that of Ribosomal RNA dihydrouridine synthase from Haemophilus influenzae (strain ATCC 51907 / DSM 11121 / KW20 / Rd).